A 74-amino-acid polypeptide reads, in one-letter code: Large ribosomal subunit protein bL31 (74 aa).

The Zn(2+) site is built by C16, C18, C37, and C40.

It belongs to the bacterial ribosomal protein bL31 family. Type A subfamily. Part of the 50S ribosomal subunit. The cofactor is Zn(2+).

Its function is as follows. Binds the 23S rRNA. The sequence is that of Large ribosomal subunit protein bL31 from Koribacter versatilis (strain Ellin345).